Here is a 1097-residue protein sequence, read N- to C-terminus: DNA-directed RNA polymerase subunit beta (1097 aa).

The interval 1072 to 1097 is disordered; the sequence is QDVNPRRSTPSRPTYESLGVADYDED.

The protein belongs to the RNA polymerase beta chain family. In cyanobacteria the RNAP catalytic core is composed of 2 alpha, 1 beta, 1 beta', 1 gamma and 1 omega subunit. When a sigma factor is associated with the core the holoenzyme is formed, which can initiate transcription.

It catalyses the reaction RNA(n) + a ribonucleoside 5'-triphosphate = RNA(n+1) + diphosphate. In terms of biological role, DNA-dependent RNA polymerase catalyzes the transcription of DNA into RNA using the four ribonucleoside triphosphates as substrates. This Synechococcus sp. (strain WH7803) protein is DNA-directed RNA polymerase subunit beta.